A 920-amino-acid chain; its full sequence is Valine--tRNA ligase (920 aa).

The short motif at 40–50 (PNVTGTLHMGH) is the 'HIGH' region element. Residues 522-526 (KMSKS) carry the 'KMSKS' region motif. K525 is a binding site for ATP. Coiled coils occupy residues 642-668 (EWIRTRLQQTIKNAEEALSQYRFDLLA) and 849-920 (AGVI…IESL).

Belongs to the class-I aminoacyl-tRNA synthetase family. ValS type 1 subfamily. Monomer.

The protein localises to the cytoplasm. It carries out the reaction tRNA(Val) + L-valine + ATP = L-valyl-tRNA(Val) + AMP + diphosphate. Functionally, catalyzes the attachment of valine to tRNA(Val). As ValRS can inadvertently accommodate and process structurally similar amino acids such as threonine, to avoid such errors, it has a 'posttransfer' editing activity that hydrolyzes mischarged Thr-tRNA(Val) in a tRNA-dependent manner. This chain is Valine--tRNA ligase, found in Coxiella burnetii (strain RSA 493 / Nine Mile phase I).